The chain runs to 1710 residues: Chromodomain-helicase-DNA-binding protein 1 (1710 aa).

The span at 1 to 10 (MNGHSDEESV) shows a compositional bias: basic and acidic residues. Positions 1 to 252 (MNGHSDEESV…KEDEEMKTDS (252 aa)) are disordered. A compositionally biased stretch (low complexity) spans 35-63 (SSGSSSDGSSSQSGSSDSDSGSESGSQSE). Basic and acidic residues predominate over residues 67–85 (DTSRENKVQAKPPKVDGAE). Positions 105–121 (QQQQQQQQQHQASSNSG) are enriched in low complexity. Residues 122–136 (SEEDSSSSEDSDDSS) are compositionally biased toward acidic residues. A compositionally biased stretch (low complexity) spans 152 to 163 (SGSGSPSQSGSD). A compositionally biased stretch (basic residues) spans 187–210 (KVKSRKPQNRSKSKNGKKILGQKK). Residues S215 and S216 each carry the phosphoserine modification. The segment covering 215-226 (SSEEDDDEEDYD) has biased composition (acidic residues). Position 237 is a phosphothreonine (T237). S241 carries the phosphoserine modification. T250 carries the post-translational modification Phosphothreonine. S252 carries the phosphoserine modification. Chromo domains lie at 272–364 (ETIE…RWLK) and 389–452 (QIVE…TPFK). At S471 the chain carries Phosphoserine. The region spanning 493 to 663 (AHSWCKGNSC…WSLLHFIMPE (171 aa)) is the Helicase ATP-binding domain. 506–513 (DEMGLGKT) is a binding site for ATP. The short motif at 614-617 (DEAH) is the DEAH box element. The Helicase C-terminal domain maps to 792–943 (LLDKLLIRLR…HLVIQRMDTT (152 aa)). A phosphoserine mark is found at S1025, S1040, S1081, S1085, S1096, S1098, S1100, and S1102. Positions 1080-1120 (ISFNGSEGRRSRSRRYSGSDSDSISEGKRPKKRGRPRTIPR) are disordered. The segment covering 1108 to 1117 (RPKKRGRPRT) has biased composition (basic residues). Residue S1161 is modified to Phosphoserine. Disordered stretches follow at residues 1321–1408 (EALS…ESEE) and 1502–1710 (KKRQ…SRKT). A compositionally biased stretch (basic residues) spans 1329 to 1345 (SKRRKARAKKNKAMKSI). Phosphoserine is present on residues S1353, S1355, S1356, S1360, S1363, S1371, and S1373. The segment covering 1370 to 1379 (LSESKSDGRE) has biased composition (basic and acidic residues). The segment at 1409–1511 (LDQKTFSICK…KKRQESQQNS (103 aa)) is CHD1 helical C-terminal domain (CHCT). The span at 1507-1516 (SQQNSDQNSN) shows a compositional bias: low complexity. Basic and acidic residues-rich tracts occupy residues 1523-1573 (RNPD…DSRK) and 1582-1670 (GKDH…DHRA). Residue S1622 is modified to Phosphoserine. Tandem repeats lie at residues 1628–1632 (HSDHR), 1634–1638 (HSDHR), and 1640–1644 (HSDHR). Positions 1628 to 1644 (HSDHRSHSDHRLHSDHR) are 3 X 5 AA repeats of H-S-D-H-R. A phosphoserine mark is found at S1677, R1688, and S1689. Basic and acidic residues predominate over residues 1690–1701 (PFEHSVEHKSTP).

This sequence belongs to the SNF2/RAD54 helicase family. Component of the SAGA complex. Interacts with BCLAF1, NCoR, SRP20 and SAFB. Specifically interacts with methylated H3K4me2 and H3K4me3. Interacts with the FACT complex, the PAF complex and the U2 snRNP. Interacts directly with PAF1, SFA3A1, SFA3A2, SFA3A3, SNF2 and SSRP1. Expressed in many tissues including in the brain, where the highest level of expression is found in the cerebellum and basal ganglia.

The protein resides in the nucleus. Its subcellular location is the cytoplasm. It carries out the reaction ATP + H2O = ADP + phosphate + H(+). In terms of biological role, ATP-dependent chromatin-remodeling factor which functions as substrate recognition component of the transcription regulatory histone acetylation (HAT) complex SAGA. Regulates polymerase II transcription. Also required for efficient transcription by RNA polymerase I, and more specifically the polymerase I transcription termination step. Regulates negatively DNA replication. Not only involved in transcription-related chromatin-remodeling, but also required to maintain a specific chromatin configuration across the genome. Is also associated with histone deacetylase (HDAC) activity. Required for the bridging of SNF2, the FACT complex, the PAF complex as well as the U2 snRNP complex to H3K4me3. Functions to modulate the efficiency of pre-mRNA splicing in part through physical bridging of spliceosomal components to H3K4me3. Required for maintaining open chromatin and pluripotency in embryonic stem cells. The chain is Chromodomain-helicase-DNA-binding protein 1 from Homo sapiens (Human).